We begin with the raw amino-acid sequence, 57 residues long: Small ribosomal subunit protein bS21 (57 aa).

It belongs to the bacterial ribosomal protein bS21 family.

The chain is Small ribosomal subunit protein bS21 from Bacillus anthracis (strain A0248).